We begin with the raw amino-acid sequence, 1547 residues long: DNA topoisomerase 2 (1547 aa).

The interval 8–30 (FNKMSSPKQNGTGEPAPAKGQKG) is disordered. The segment covering 9–19 (NKMSSPKQNGT) has biased composition (polar residues). Residues asparagine 99, asparagine 128, 156 to 158 (SSN), and 169 to 176 (GRNGYGAK) contribute to the ATP site. The interaction with DNA stretch occupies residues 351–353 (KKK). 385-387 (QTK) contacts ATP. The region spanning 463-580 (CTLILTEGDS…ELLKLPFLEE (118 aa)) is the Toprim domain. The Mg(2+) site is built by glutamate 469, aspartate 549, and aspartate 551. Residues 723 to 1192 (IPSMIDGLKP…TAPMLWREDL (470 aa)) enclose the Topo IIA-type catalytic domain. Tyrosine 813 serves as the catalytic O-(5'-phospho-DNA)-tyrosine intermediate. The segment at 996–1005 (KLQTTISMTC) is interaction with DNA. Disordered stretches follow at residues 1107–1134 (TALE…VDPD), 1209–1249 (EELN…ISDD), 1261–1423 (KTRK…MDSD), and 1459–1547 (RQRR…SLSD). Positions 1109–1123 (LEDDDAQESEEEEPE) are enriched in acidic residues. Residues 1124 to 1134 (PDPKGKPVDPD) are compositionally biased toward basic and acidic residues. A compositionally biased stretch (basic residues) spans 1216-1228 (KTSKAMAGKKNRK). 2 stretches are compositionally biased toward basic and acidic residues: residues 1238 to 1249 (NGRRVEPKISDD) and 1294 to 1315 (EKPE…DGLK). Residues 1331-1344 (TFSGSSSGEMSASD) are compositionally biased toward low complexity. Residues 1373 to 1383 (DDSGSDSEPEL) show a composition bias toward acidic residues. 2 stretches are compositionally biased toward basic and acidic residues: residues 1384 to 1394 (LDNKIDSDHEA) and 1459 to 1488 (RQRR…DEKK). The span at 1513–1528 (KGKKKTAANPKKKAKK) shows a compositional bias: basic residues. Residues 1537-1547 (DFNISDSSLSD) are compositionally biased toward polar residues.

The protein belongs to the type II topoisomerase family. In terms of assembly, homodimer. Mg(2+) is required as a cofactor. Mn(2+) serves as cofactor. It depends on Ca(2+) as a cofactor.

The protein localises to the nucleus. It carries out the reaction ATP-dependent breakage, passage and rejoining of double-stranded DNA.. Its function is as follows. Control of topological states of DNA by transient breakage and subsequent rejoining of DNA strands. Topoisomerase II makes double-strand breaks. The chain is DNA topoisomerase 2 (TOP2) from Bombyx mori (Silk moth).